The primary structure comprises 397 residues: MSESVHTNTSLWSKGMKAVIVAQFLSAFGDNALLFATLALLKAQFYPEWSQPILQMVFVGAYILFAPFVGQVADSFAKGRVMMFANGLKLLGAASICFGINPFLGYTLVGVGAAAYSPAKYGILGELTTGSKLVKANGLMEASTIAAILLGSVAGGVLADWHVLVALAACALAYGGAVVANIYIPKLAAARPGQSWNLINMTRSFLNACTSLWRNGETRFSLVGTSLFWGAGVTLRFLLVLWVPVALGITDNATPTYLNAMVAIGIVVGAGAAAKLVTLETVSRCMPAGILIGVVVLIFSLQHELLPAYALLMLIGVMGGFFVVPLNALLQERGKKSVGAGNAIAVQNLGENSAMLLMLGIYSLAVMVGIPVVPIGIGFGALFALAITALWIWQRRH.

Over 1 to 17 (MSESVHTNTSLWSKGMK) the chain is Periplasmic. The helical transmembrane segment at 18–38 (AVIVAQFLSAFGDNALLFATL) threads the bilayer. Residues 39–52 (ALLKAQFYPEWSQP) are Cytoplasmic-facing. Residues 53-73 (ILQMVFVGAYILFAPFVGQVA) form a helical membrane-spanning segment. Residues 74 to 90 (DSFAKGRVMMFANGLKL) are Periplasmic-facing. Residues 91 to 111 (LGAASICFGINPFLGYTLVGV) form a helical membrane-spanning segment. At 112–144 (GAAAYSPAKYGILGELTTGSKLVKANGLMEAST) the chain is on the cytoplasmic side. The chain crosses the membrane as a helical span at residues 145 to 165 (IAAILLGSVAGGVLADWHVLV). Position 166 (Ala166) is a topological domain, periplasmic. A helical transmembrane segment spans residues 167–187 (LAACALAYGGAVVANIYIPKL). Residues 188 to 226 (AAARPGQSWNLINMTRSFLNACTSLWRNGETRFSLVGTS) are Cytoplasmic-facing. The helical transmembrane segment at 227 to 247 (LFWGAGVTLRFLLVLWVPVAL) threads the bilayer. At 248 to 256 (GITDNATPT) the chain is on the periplasmic side. A helical transmembrane segment spans residues 257–277 (YLNAMVAIGIVVGAGAAAKLV). Residues 278–280 (TLE) lie on the Cytoplasmic side of the membrane. Residues 281–301 (TVSRCMPAGILIGVVVLIFSL) traverse the membrane as a helical segment. At 302–304 (QHE) the chain is on the periplasmic side. The chain crosses the membrane as a helical span at residues 305–325 (LLPAYALLMLIGVMGGFFVVP). Residues 326 to 343 (LNALLQERGKKSVGAGNA) are Cytoplasmic-facing. Residues 344-364 (IAVQNLGENSAMLLMLGIYSL) form a helical membrane-spanning segment. Residues 365-366 (AV) are Periplasmic-facing. Residues 367 to 387 (MVGIPVVPIGIGFGALFALAI) traverse the membrane as a helical segment. The Cytoplasmic portion of the chain corresponds to 388 to 397 (TALWIWQRRH).

It belongs to the major facilitator superfamily. LplT (TC 2.A.1.42) family.

The protein resides in the cell inner membrane. Catalyzes the facilitated diffusion of 2-acyl-glycero-3-phosphoethanolamine (2-acyl-GPE) into the cell. This is Lysophospholipid transporter LplT from Escherichia coli (strain ATCC 8739 / DSM 1576 / NBRC 3972 / NCIMB 8545 / WDCM 00012 / Crooks).